The following is a 714-amino-acid chain: Mitochondrial division protein 1 (714 aa).

Residues 240 to 298 adopt a coiled-coil conformation; the sequence is LNIQKNSTLSEIRDIEVEVENLRQKKEKLLGKIANIEQNQLLLEDNLKQIDDRLDFLEE. Residues 323–354 form a disordered region; the sequence is LKNDAIRNEGVTTESISSEASNLPPRRRQQLR. Over residues 332-343 the composition is skewed to polar residues; sequence GVTTESISSEAS. Residue S376 is modified to Phosphoserine. 7 WD repeats span residues 396–436, 439–478, 500–539, 561–603, 604–642, 644–681, and 685–714; these read THDD…KIGE, GHLATINCMQINRDYGTLVTGGRDAALKLWNLNLAQQLYQ, AHTDEVTALSLDPSFLVSGSQDRTIRQWDLRSGKCLQTID, TQRN…RTLK, GHTDAITSLKFDSACLVTGSYDRTVRIWDLRTGLLNKFH, YSAPVLSLDLFQENAAVVVADEPSVQIYDSEKDESWSC, and GNETSVSTVKYKENYMVEGRENGDVNIWAV.

Belongs to the WD repeat MDV1/CAF4 family. In terms of assembly, interacts with CAF4, DNM1 and FIS1, components of the mitochondrial fission machinery. Interacts via its N-terminal, coiled-coil extension (NTE) with FIS1, and via its WD repeats with DNM1.

The protein localises to the mitochondrion outer membrane. Its function is as follows. Involved in mitochondrial fission. Has a partially redundant function to CAF4 in acting as an adapter protein, binding to FIS1 on the mitochondrial outer membrane and recruiting the dynamin-like GTPase DNM1 to form mitochondrial fission complexes. Formation of these complexes is required to promote constriction and fission of the mitochondrial compartment at a late step in mitochondrial division. The chain is Mitochondrial division protein 1 (MDV1) from Saccharomyces cerevisiae (strain ATCC 204508 / S288c) (Baker's yeast).